A 257-amino-acid chain; its full sequence is Diaminopimelate epimerase (257 aa).

3 residues coordinate substrate: Asn13, Gln46, and Asn66. The Proton donor role is filled by Cys75. Substrate contacts are provided by residues 76-77 (GN), Asn145, Asn175, and 193-194 (ER). The Proton acceptor role is filled by Cys202. 203 to 204 (GS) provides a ligand contact to substrate.

The protein belongs to the diaminopimelate epimerase family. In terms of assembly, homodimer.

Its subcellular location is the cytoplasm. It catalyses the reaction (2S,6S)-2,6-diaminopimelate = meso-2,6-diaminopimelate. It functions in the pathway amino-acid biosynthesis; L-lysine biosynthesis via DAP pathway; DL-2,6-diaminopimelate from LL-2,6-diaminopimelate: step 1/1. In terms of biological role, catalyzes the stereoinversion of LL-2,6-diaminopimelate (L,L-DAP) to meso-diaminopimelate (meso-DAP), a precursor of L-lysine and an essential component of the bacterial peptidoglycan. This Gluconobacter oxydans (strain 621H) (Gluconobacter suboxydans) protein is Diaminopimelate epimerase.